The sequence spans 281 residues: Complement C1q tumor necrosis factor-related protein 1 (281 aa).

The first 25 residues, Met1–Ser25, serve as a signal peptide directing secretion. Residues Gln35 to Leu68 are disordered. Residues Thr51 to Glu66 show a composition bias toward basic and acidic residues. Asn93 is a glycosylation site (N-linked (GlcNAc...) asparagine). Positions Gly99 to His140 constitute a Collagen-like domain. A disordered region spans residues Arg107–Ala136. A C1q domain is found at Cys141–Pro281.

Its subcellular location is the secreted. This Mus musculus (Mouse) protein is Complement C1q tumor necrosis factor-related protein 1 (C1qtnf1).